The chain runs to 433 residues: Tyrosine--tRNA ligase (433 aa).

Residue tyrosine 34 coordinates L-tyrosine. Positions 39-48 (PTASSLHVGS) match the 'HIGH' region motif. L-tyrosine-binding residues include tyrosine 169 and glutamine 173. Residues 229–233 (KMGKT) carry the 'KMSKS' region motif. Lysine 232 provides a ligand contact to ATP. The 69-residue stretch at 364–432 (IPAFVLFHTV…RYHTIVVRKG (69 aa)) folds into the S4 RNA-binding domain.

Belongs to the class-I aminoacyl-tRNA synthetase family. TyrS type 1 subfamily. In terms of assembly, homodimer.

The protein localises to the cytoplasm. The catalysed reaction is tRNA(Tyr) + L-tyrosine + ATP = L-tyrosyl-tRNA(Tyr) + AMP + diphosphate + H(+). In terms of biological role, catalyzes the attachment of tyrosine to tRNA(Tyr) in a two-step reaction: tyrosine is first activated by ATP to form Tyr-AMP and then transferred to the acceptor end of tRNA(Tyr). This Desulfosudis oleivorans (strain DSM 6200 / JCM 39069 / Hxd3) (Desulfococcus oleovorans) protein is Tyrosine--tRNA ligase.